The chain runs to 463 residues: Glutamate--tRNA ligase 2 (463 aa).

The 'HIGH' region signature appears at 11–21; the sequence is PSPTGYLHIGG. The 'KMSKS' region motif lies at 240–244; that stretch reads KLSKR. K243 provides a ligand contact to ATP.

It belongs to the class-I aminoacyl-tRNA synthetase family. Glutamate--tRNA ligase type 1 subfamily. In terms of assembly, monomer.

It localises to the cytoplasm. It catalyses the reaction tRNA(Glu) + L-glutamate + ATP = L-glutamyl-tRNA(Glu) + AMP + diphosphate. In terms of biological role, catalyzes the attachment of glutamate to tRNA(Glu) in a two-step reaction: glutamate is first activated by ATP to form Glu-AMP and then transferred to the acceptor end of tRNA(Glu). This chain is Glutamate--tRNA ligase 2, found in Campylobacter jejuni subsp. jejuni serotype O:2 (strain ATCC 700819 / NCTC 11168).